Consider the following 521-residue polypeptide: Probable methylmalonate-semialdehyde/malonate-semialdehyde dehydrogenase [acylating], mitochondrial (521 aa).

NAD(+) is bound by residues F172, K196, E199, R200, and S249. Residue C304 is the Nucleophile of the active site. Residue E404 coordinates NAD(+).

The protein belongs to the aldehyde dehydrogenase family. In terms of assembly, homotetramer.

The protein resides in the mitochondrion. The enzyme catalyses 2-methyl-3-oxopropanoate + NAD(+) + CoA + H2O = propanoyl-CoA + hydrogencarbonate + NADH + H(+). It catalyses the reaction 3-oxopropanoate + NAD(+) + CoA + H2O = hydrogencarbonate + acetyl-CoA + NADH + H(+). In terms of biological role, probable malonate and methylmalonate semialdehyde dehydrogenase involved in the catabolism of valine, thymine, and compounds catabolized by way of beta-alanine, including uracil and cytidine. This chain is Probable methylmalonate-semialdehyde/malonate-semialdehyde dehydrogenase [acylating], mitochondrial, found in Aedes aegypti (Yellowfever mosquito).